Consider the following 448-residue polypeptide: Deoxyguanosinetriphosphate triphosphohydrolase-like protein (448 aa).

Residues 67 to 260 form the HD domain; it reads RLTHSLEVSQ…MELADDIAYG (194 aa).

It belongs to the dGTPase family. Type 2 subfamily.

This chain is Deoxyguanosinetriphosphate triphosphohydrolase-like protein, found in Aliivibrio fischeri (strain ATCC 700601 / ES114) (Vibrio fischeri).